Reading from the N-terminus, the 141-residue chain is Nucleoside diphosphate kinase (141 aa).

ATP-binding residues include lysine 11, phenylalanine 59, arginine 87, threonine 93, arginine 104, and asparagine 114. The active-site Pros-phosphohistidine intermediate is the histidine 117.

This sequence belongs to the NDK family. As to quaternary structure, homotetramer. Mg(2+) is required as a cofactor.

Its subcellular location is the cytoplasm. It catalyses the reaction a 2'-deoxyribonucleoside 5'-diphosphate + ATP = a 2'-deoxyribonucleoside 5'-triphosphate + ADP. The catalysed reaction is a ribonucleoside 5'-diphosphate + ATP = a ribonucleoside 5'-triphosphate + ADP. Its function is as follows. Major role in the synthesis of nucleoside triphosphates other than ATP. The ATP gamma phosphate is transferred to the NDP beta phosphate via a ping-pong mechanism, using a phosphorylated active-site intermediate. The protein is Nucleoside diphosphate kinase of Bdellovibrio bacteriovorus (strain ATCC 15356 / DSM 50701 / NCIMB 9529 / HD100).